The following is a 409-amino-acid chain: Tyrosine--tRNA ligase (409 aa).

The short motif at 54 to 63 (PTAPDIHLGH) is the 'HIGH' region element. The short motif at 238–242 (KMSKS) is the 'KMSKS' region element. ATP is bound at residue Lys241. In terms of domain architecture, S4 RNA-binding spans 347-407 (MGILHVLRAS…GKRKFARVNL (61 aa)).

It belongs to the class-I aminoacyl-tRNA synthetase family. TyrS type 2 subfamily. In terms of assembly, homodimer.

It is found in the cytoplasm. The catalysed reaction is tRNA(Tyr) + L-tyrosine + ATP = L-tyrosyl-tRNA(Tyr) + AMP + diphosphate + H(+). Functionally, catalyzes the attachment of tyrosine to tRNA(Tyr) in a two-step reaction: tyrosine is first activated by ATP to form Tyr-AMP and then transferred to the acceptor end of tRNA(Tyr). This chain is Tyrosine--tRNA ligase, found in Bordetella avium (strain 197N).